Consider the following 367-residue polypeptide: 3-dehydroquinate synthase (367 aa).

NAD(+) is bound by residues glycine 112–aspartate 116, threonine 136–threonine 137, lysine 149, lysine 158, and threonine 176–threonine 179. Glutamate 191, histidine 256, and histidine 273 together coordinate Zn(2+).

This sequence belongs to the sugar phosphate cyclases superfamily. Dehydroquinate synthase family. NAD(+) is required as a cofactor. It depends on Co(2+) as a cofactor. Zn(2+) serves as cofactor.

It localises to the cytoplasm. It carries out the reaction 7-phospho-2-dehydro-3-deoxy-D-arabino-heptonate = 3-dehydroquinate + phosphate. It functions in the pathway metabolic intermediate biosynthesis; chorismate biosynthesis; chorismate from D-erythrose 4-phosphate and phosphoenolpyruvate: step 2/7. In terms of biological role, catalyzes the conversion of 3-deoxy-D-arabino-heptulosonate 7-phosphate (DAHP) to dehydroquinate (DHQ). The polypeptide is 3-dehydroquinate synthase (Prochlorococcus marinus (strain SARG / CCMP1375 / SS120)).